Consider the following 454-residue polypeptide: MSQPQTVTVDQQEILNRADEVEAPMATPPTDVPQAPSGLTAANNAAEQLAVSADNVRLYLQAGERERQRLATSLRNAAAAYGEVEDESATALDNDGNGEVDAQSAGGAGAGQTESLEETPKVAAAGESDFTDLKTAATKLESGDQGTSMVNFADGWNNFNLSLQRDIKRFRIFENWEGDAATACEASMDQQKEWILHMAKLSASLAKQANFMAQLQLWARRGHPTLADIVELERLAKDPDYQEQAIKLYAEYQETSEKVLSEYNTKADLEPVNPPKPPAAIKIDPPPPAQPQGLIPGFLMPPGDGSTGLASGMTPPMIPPTGGAGGTPDVNTAELTSAGREAASNLSKGLGVKPMSLGGGGGGLGGMPMGDAALAGGESVRPAAAGDIAGAGQGGGAAGRGMAGGGMGMPMGGAGQGQGGAKSKGAQQDEEALYTEDREWTEAVIGNRRRQDNK.

Disordered regions lie at residues 17 to 40 (RADEVEAPMATPPTDVPQAPSGLT), 82 to 128 (GEVE…AGES), and 391 to 454 (AGQG…QDNK). Residues 391–422 (AGQGGGAAGRGMAGGGMGMPMGGAGQGQGGAK) are compositionally biased toward gly residues.

Belongs to the EspB family. Cleaved at close to the C-terminus during secretion.

The protein localises to the secreted. This Mycobacterium marinum (strain ATCC BAA-535 / M) protein is ESX-1 secretion-associated protein EspB.